Reading from the N-terminus, the 321-residue chain is NADH-quinone oxidoreductase subunit H (321 aa).

The next 8 helical transmembrane spans lie at 9–29 (LLAI…GAYM), 78–98 (IIFT…FAIM), 111–131 (IGIL…LLGG), 156–176 (FLGL…ISTI), 183–203 (IWNI…GLAI), 234–254 (FFIG…TLFF), 262–282 (LPPY…FILI), and 296–316 (ILGW…TAIV).

This sequence belongs to the complex I subunit 1 family. As to quaternary structure, NDH-1 is composed of 14 different subunits. Subunits NuoA, H, J, K, L, M, N constitute the membrane sector of the complex.

Its subcellular location is the cell membrane. It catalyses the reaction a quinone + NADH + 5 H(+)(in) = a quinol + NAD(+) + 4 H(+)(out). Its function is as follows. NDH-1 shuttles electrons from NADH, via FMN and iron-sulfur (Fe-S) centers, to quinones in the respiratory chain. The immediate electron acceptor for the enzyme in this species is believed to be ubiquinone. Couples the redox reaction to proton translocation (for every two electrons transferred, four hydrogen ions are translocated across the cytoplasmic membrane), and thus conserves the redox energy in a proton gradient. This subunit may bind ubiquinone. In Baumannia cicadellinicola subsp. Homalodisca coagulata, this protein is NADH-quinone oxidoreductase subunit H.